The sequence spans 62 residues: Large ribosomal subunit protein uL30 (62 aa).

Belongs to the universal ribosomal protein uL30 family. As to quaternary structure, part of the 50S ribosomal subunit.

This is Large ribosomal subunit protein uL30 from Pseudoalteromonas atlantica (strain T6c / ATCC BAA-1087).